A 300-amino-acid chain; its full sequence is Inositol polyphosphate multikinase beta (300 aa).

Phosphoserine is present on S78.

It belongs to the inositol phosphokinase (IPK) family. Interacts with KIN10 and KIN11. Post-translationally, phosphorylated by KIN10. Expressed in leaves, stems, roots, siliques and flowers. Detected in vascular strands, stigma cells, the abscission zones of fully elongated siliques, the root central cylinder and the root tip.

The protein localises to the nucleus. It carries out the reaction 1D-myo-inositol 1,4,5-trisphosphate + 2 ATP = 1D-myo-inositol 1,3,4,5,6-pentakisphosphate + 2 ADP + 2 H(+). The enzyme catalyses 1D-myo-inositol 1,3,4,6-tetrakisphosphate + ATP = 1D-myo-inositol 1,3,4,5,6-pentakisphosphate + ADP + H(+). With respect to regulation, down-regulated by KIN10 through its protein phosphorylation. Inositol phosphate kinase with a broad substrate specificity. Phosphorylates inositol 1,4,5-trisphosphate (Ins(1,4,5)P3), inositol 1,4,5,6-tetrakisphosphate (Ins(1,4,5,6)P4), inositol 1,3,4,5-tetrakisphosphate (Ins(1,3,4,5)P4), inositol 1,3,4,6-tetrakisphosphate (Ins(1,3,4,6)P4) and inositol 1,2,3,4,6-pentakisphosphate (Ins(1,2,3,4,6)P5) but not inositol 1,4-bisphosphate (Ins(1,4)P2), inositol 1,3,4-trisphosphate (Ins(1,3,4)P3), inositol 1,2,6-trisphosphate (Ins(1,2,6)P3), inositol 3,4,5,6-tetrakisphosphate (Ins(3,4,5,6)P4), inositol 1,3,4,5,6-pentakisphosphate (Ins(1,3,4,5,6)P5), inositol 1,2,4,5,6-pentakisphosphate (Ins(1,2,4,5,6)P5) or inositol hexakisphosphate (InsP6). Involved in the auxin signaling pathway. Regulates axillary shoot branching and is required for phytate synthesis in seeds. This Arabidopsis thaliana (Mouse-ear cress) protein is Inositol polyphosphate multikinase beta (IPK2b).